We begin with the raw amino-acid sequence, 399 residues long: Succinate--CoA ligase [ADP-forming] subunit beta (399 aa).

The 246-residue stretch at 9–254 (KAVLQPFGVS…TTEEDAKEIE (246 aa)) folds into the ATP-grasp domain. Residues K46, 53–55 (GRG), E109, S112, and E117 each bind ATP. N209 and D223 together coordinate Mg(2+). Substrate contacts are provided by residues N274 and 331-333 (GIM).

Belongs to the succinate/malate CoA ligase beta subunit family. As to quaternary structure, heterotetramer of two alpha and two beta subunits. Mg(2+) serves as cofactor.

The catalysed reaction is succinate + ATP + CoA = succinyl-CoA + ADP + phosphate. The enzyme catalyses GTP + succinate + CoA = succinyl-CoA + GDP + phosphate. The protein operates within carbohydrate metabolism; tricarboxylic acid cycle; succinate from succinyl-CoA (ligase route): step 1/1. Its function is as follows. Succinyl-CoA synthetase functions in the citric acid cycle (TCA), coupling the hydrolysis of succinyl-CoA to the synthesis of either ATP or GTP and thus represents the only step of substrate-level phosphorylation in the TCA. The beta subunit provides nucleotide specificity of the enzyme and binds the substrate succinate, while the binding sites for coenzyme A and phosphate are found in the alpha subunit. The chain is Succinate--CoA ligase [ADP-forming] subunit beta from Rhodopseudomonas palustris (strain BisA53).